A 473-amino-acid chain; its full sequence is Aspartyl/glutamyl-tRNA(Asn/Gln) amidotransferase subunit B (473 aa).

This sequence belongs to the GatB/GatE family. GatB subfamily. In terms of assembly, heterotrimer of A, B and C subunits.

The catalysed reaction is L-glutamyl-tRNA(Gln) + L-glutamine + ATP + H2O = L-glutaminyl-tRNA(Gln) + L-glutamate + ADP + phosphate + H(+). The enzyme catalyses L-aspartyl-tRNA(Asn) + L-glutamine + ATP + H2O = L-asparaginyl-tRNA(Asn) + L-glutamate + ADP + phosphate + 2 H(+). Functionally, allows the formation of correctly charged Asn-tRNA(Asn) or Gln-tRNA(Gln) through the transamidation of misacylated Asp-tRNA(Asn) or Glu-tRNA(Gln) in organisms which lack either or both of asparaginyl-tRNA or glutaminyl-tRNA synthetases. The reaction takes place in the presence of glutamine and ATP through an activated phospho-Asp-tRNA(Asn) or phospho-Glu-tRNA(Gln). The protein is Aspartyl/glutamyl-tRNA(Asn/Gln) amidotransferase subunit B of Methanococcoides burtonii (strain DSM 6242 / NBRC 107633 / OCM 468 / ACE-M).